A 322-amino-acid chain; its full sequence is GTP 3',8-cyclase (322 aa).

A Radical SAM core domain is found at 5-233; it reads KYGRVVDYLR…NAPASIYRLD (229 aa). Residue R14 coordinates GTP. [4Fe-4S] cluster is bound by residues C21 and C25. S-adenosyl-L-methionine is bound at residue Y27. Residue C28 participates in [4Fe-4S] cluster binding. R64 provides a ligand contact to GTP. G68 serves as a coordination point for S-adenosyl-L-methionine. A GTP-binding site is contributed by T95. S-adenosyl-L-methionine is bound at residue S119. K155 contacts GTP. An S-adenosyl-L-methionine-binding site is contributed by M189. Positions 249 and 252 each coordinate [4Fe-4S] cluster. 254–256 contributes to the GTP binding site; it reads RIR. A [4Fe-4S] cluster-binding site is contributed by C266.

This sequence belongs to the radical SAM superfamily. MoaA family. In terms of assembly, monomer and homodimer. [4Fe-4S] cluster is required as a cofactor.

The catalysed reaction is GTP + AH2 + S-adenosyl-L-methionine = (8S)-3',8-cyclo-7,8-dihydroguanosine 5'-triphosphate + 5'-deoxyadenosine + L-methionine + A + H(+). It functions in the pathway cofactor biosynthesis; molybdopterin biosynthesis. Catalyzes the cyclization of GTP to (8S)-3',8-cyclo-7,8-dihydroguanosine 5'-triphosphate. In Campylobacter curvus (strain 525.92), this protein is GTP 3',8-cyclase.